The primary structure comprises 171 residues: Calcium channel flower homolog (171 aa).

Over 1–31 (MSGSVAAGAAAGPVPPAQEEGMTWWYRWLCR) the chain is Cytoplasmic. The chain crosses the membrane as a helical span at residues 32–52 (LAGVLGAVSCAISGLFNCVTI). At 53-56 (HPLN) the chain is on the extracellular side. The chain crosses the membrane as a helical span at residues 57 to 77 (IAAGVWMIMNAFILLLCEAPF). Residues 78-101 (CCQFVEFANTVAEKVDRLRSWQKA) lie on the Cytoplasmic side of the membrane. A helical transmembrane segment spans residues 102–122 (VFYCGMAIVPIVMSLTLTTLL). Over 123–124 (GN) the chain is Extracellular. The chain crosses the membrane as a helical span at residues 125–141 (AIAFATGVLYGLSALGK). The Cytoplasmic portion of the chain corresponds to 142–171 (KGDAISYARIQQQRQQADEEKLAETFEGEL).

Belongs to the calcium channel flower family. In terms of assembly, interacts with adaptor protein complex 2 (AP-2). As to expression, expressed in calyces in the brain (at protein level). Detected in cultured hippocampal neurons (at protein level).

Its subcellular location is the cell membrane. The protein resides in the cytoplasmic vesicle. The protein localises to the secretory vesicle. It localises to the synaptic vesicle. It is found in the golgi apparatus. Its subcellular location is the vesicle. Its function is as follows. Transmembrane protein which mediates synaptic endocytosis and fitness-based cell culling. In response to different stimulus strengths, controls two major modes of synaptic vesicle (SV) retrieval in hippocampal neurons; Clathrin-mediated endocytosis (CME) in response to mild stimulation and activity-dependent bulk endocytosis (ADBE) in response to strong stimulation. In cytotoxic T-lymphoocytes (CTLs) facilitates calcium-dependent endocytosis of cytotoxic granules (CGs) at the immuno synapse. Different isoforms work as fitness fingerprints in 'loser' and 'winner' cells and thereby mediate win/lose decisions as part of the cell competition process. This Rattus norvegicus (Rat) protein is Calcium channel flower homolog (Cacfd1).